We begin with the raw amino-acid sequence, 1335 residues long: Probable serine/threonine-protein kinase ndrC (1335 aa).

Disordered stretches follow at residues 1–70, 85–158, 276–447, and 462–603; these read MSRK…KKGS, VDTH…LIPS, LPPP…SPLN, and TTTT…NNNK. The span at 8–17 shows a compositional bias: polar residues; sequence NRSSSSNSIE. Residues 27–41 show a composition bias toward low complexity; sequence SNISNSSNINCNNSS. Residues 55–70 show a composition bias toward basic residues; the sequence is RSKHSSPIHSLKKKGS. Positions 89–117 are enriched in low complexity; sequence SSSNSNNNSSSNNNNNNNNHNINSSSESS. Residues 118-132 are compositionally biased toward polar residues; the sequence is TPTTPRSSFTPQVTM. Over residues 133–153 the composition is skewed to low complexity; the sequence is NSNQSSGNNSPQLSSRSSSQS. The span at 276–288 shows a compositional bias: pro residues; sequence LPPPSQQQLPPPQ. Low complexity-rich tracts occupy residues 289–331, 345–368, 382–396, 412–424, 437–447, and 462–484; these read SHQQ…TPQS, NQQQIQSSQSTTPTNSSQKSSPNK, SPSPSSPSSPSSPSS, PTPLIITPSSPSS, PSSFSGGSPLN, and TTTTTTTTTTSSSSSLSVTTTIS. Positions 485–497 are enriched in polar residues; it reads NPNYTQNLPTTPL. The span at 498-507 shows a compositional bias: low complexity; that stretch reads SNSSSNNNNN. Polar residues predominate over residues 508–528; that stretch reads GSFITLQDTTNNKSIINNNRE. The span at 540-566 shows a compositional bias: low complexity; it reads SSGSSNTTSSTTNTTTPSSSSLTTSSG. A compositionally biased stretch (basic and acidic residues) spans 567–581; the sequence is KESRDRDSKDKEKDL. The segment covering 586 to 602 has biased composition (low complexity); the sequence is NNNNNNNNNNNNNNNNN. Residues 586 to 613 are a coiled coil; it reads NNNNNNNNNNNNNNNNNKVEKEKENYCK. The 302-residue stretch at 718–1019 folds into the Protein kinase domain; sequence FKILTQIGKG…KQDFKNHPFF (302 aa). ATP is bound by residues 724 to 732 and Lys747; that span reads IGKGGFGQV. Residue Asp840 is the Proton acceptor of the active site. Residues 1020-1106 enclose the AGC-kinase C-terminal domain; that stretch reads KNHNWDEIVN…RKSSALSLSM (87 aa). Residues 1239 to 1284 are compositionally biased toward low complexity; sequence SQSQPSLANQLQSSSSSPSPSLQSQSQSPSLQSSSKSTPNLSSSLL. Residues 1239–1313 form a disordered region; sequence SQSQPSLANQ…IKKENESEEI (75 aa). Positions 1287-1313 are enriched in basic and acidic residues; it reads PVKEELEYKNQTENEVEIKKENESEEI. Residues 1289–1325 are a coiled coil; it reads KEELEYKNQTENEVEIKKENESEEIQSLRDQLKEIII.

The protein belongs to the protein kinase superfamily. AGC Ser/Thr protein kinase family.

The enzyme catalyses L-seryl-[protein] + ATP = O-phospho-L-seryl-[protein] + ADP + H(+). It carries out the reaction L-threonyl-[protein] + ATP = O-phospho-L-threonyl-[protein] + ADP + H(+). This Dictyostelium discoideum (Social amoeba) protein is Probable serine/threonine-protein kinase ndrC (ndrC).